A 147-amino-acid chain; its full sequence is D-aminoacyl-tRNA deacylase (147 aa).

The Gly-cisPro motif, important for rejection of L-amino acids signature appears at 136 to 137 (GP).

The protein belongs to the DTD family. Homodimer.

Its subcellular location is the cytoplasm. The catalysed reaction is glycyl-tRNA(Ala) + H2O = tRNA(Ala) + glycine + H(+). It carries out the reaction a D-aminoacyl-tRNA + H2O = a tRNA + a D-alpha-amino acid + H(+). Functionally, an aminoacyl-tRNA editing enzyme that deacylates mischarged D-aminoacyl-tRNAs. Also deacylates mischarged glycyl-tRNA(Ala), protecting cells against glycine mischarging by AlaRS. Acts via tRNA-based rather than protein-based catalysis; rejects L-amino acids rather than detecting D-amino acids in the active site. By recycling D-aminoacyl-tRNA to D-amino acids and free tRNA molecules, this enzyme counteracts the toxicity associated with the formation of D-aminoacyl-tRNA entities in vivo and helps enforce protein L-homochirality. The chain is D-aminoacyl-tRNA deacylase from Streptococcus thermophilus (strain CNRZ 1066).